The sequence spans 294 residues: MLILGSHVSLKGNDMFYGSVLEALEYNANTMMVYTGAPQNTIRKPIETMKIEEAHALMKEKGIDLNHVVVHAPYIINLCNPDPERRAFAVEFLTKEVIRVGQMGINQMVLHPGSAVGGNREEAVQWISEGLNQIIDNTKSYNVRIALETMAGKGNEIGKTFEEIKAIIDGVDDKSRVSVCFDTCHVHDAGYDVIHDLDKTLQLFDDIVGLNYISVVHVNDSKNELGASKDRHENIGFGYIGYDALLKVIYHEAFKEIPKILETPYVNDKPPYKLEIQMIKDRVFDNELKTKLEK.

Zn(2+) contacts are provided by His-71, His-111, Glu-148, Asp-182, His-185, His-217, Asp-230, His-232, and Glu-262.

This sequence belongs to the AP endonuclease 2 family. Zn(2+) serves as cofactor.

It catalyses the reaction Endonucleolytic cleavage to 5'-phosphooligonucleotide end-products.. Endonuclease IV plays a role in DNA repair. It cleaves phosphodiester bonds at apurinic or apyrimidinic (AP) sites, generating a 3'-hydroxyl group and a 5'-terminal sugar phosphate. The chain is Probable endonuclease 4 from Acholeplasma laidlawii (strain PG-8A).